The following is a 148-amino-acid chain: SUMO-conjugating enzyme UBC9 (148 aa).

The region spanning 1–147 (MASKRILKEL…ARTWTQKYAM (147 aa)) is the UBC core domain. Catalysis depends on C85, which acts as the Glycyl thioester intermediate.

The protein belongs to the ubiquitin-conjugating enzyme family. In terms of assembly, interacts with CHIP. As to expression, highest expression in young stems and old leaves. Lowest levels in floral buds, anthers and young leaves.

It functions in the pathway protein modification; protein sumoylation. Its function is as follows. Accepts the ubiquitin-like protein SUMO/SMT3 from the E1 complex and catalyzes its covalent attachment to other proteins. Mediates the selective degradation of short-lived and abnormal proteins. The polypeptide is SUMO-conjugating enzyme UBC9 (UBC9) (Arabidopsis thaliana (Mouse-ear cress)).